The following is a 288-amino-acid chain: Bifunctional protein FolD (288 aa).

NADP(+) is bound by residues 164 to 166 (GTS) and I230.

Belongs to the tetrahydrofolate dehydrogenase/cyclohydrolase family. Homodimer.

The enzyme catalyses (6R)-5,10-methylene-5,6,7,8-tetrahydrofolate + NADP(+) = (6R)-5,10-methenyltetrahydrofolate + NADPH. It catalyses the reaction (6R)-5,10-methenyltetrahydrofolate + H2O = (6R)-10-formyltetrahydrofolate + H(+). It functions in the pathway one-carbon metabolism; tetrahydrofolate interconversion. Its function is as follows. Catalyzes the oxidation of 5,10-methylenetetrahydrofolate to 5,10-methenyltetrahydrofolate and then the hydrolysis of 5,10-methenyltetrahydrofolate to 10-formyltetrahydrofolate. The protein is Bifunctional protein FolD of Mycoplasma mycoides subsp. mycoides SC (strain CCUG 32753 / NCTC 10114 / PG1).